A 188-amino-acid polypeptide reads, in one-letter code: Large ribosomal subunit protein uL5 (188 aa).

Belongs to the universal ribosomal protein uL5 family. Part of the 50S ribosomal subunit; contacts the 5S rRNA and probably tRNA. Forms a bridge to the 30S subunit in the 70S ribosome.

This is one of the proteins that bind and probably mediate the attachment of the 5S RNA into the large ribosomal subunit, where it forms part of the central protuberance. In the 70S ribosome it contacts protein S13 of the 30S subunit (bridge B1b), connecting the 2 subunits; this bridge is implicated in subunit movement. May contact the P site tRNA; the 5S rRNA and some of its associated proteins might help stabilize positioning of ribosome-bound tRNAs. This Pyrococcus abyssi (strain GE5 / Orsay) protein is Large ribosomal subunit protein uL5.